The primary structure comprises 309 residues: MPKLNDVVAEIAADLAKATERGAVATYIPMLAEVPINQFGMAVVTADGETILAGDADTVFSIQSISKVFTLTLALGQIGDALWTRVGKEPSGNAFNSIVQLEYEHGIPRNPFINAGAIVVADAMLSGHQPREALGAILRFVRFVAADESITIDEAVARSEKETGFRNTALANYMRSFGVLRHPVDHALGVYFHQCAIAMSCRHLARAGRYLAFSGRLTPEGPSVVASERARRIAALMLTCGHYDGSGDFAFRVGLPGKSGVGGGILAIAPGKASIAVWSPGLDPHGNSLLGSIALERLAKAMRWSVFAG.

Residues S64, N114, E160, N167, Y191, Y243, and V261 each coordinate substrate.

This sequence belongs to the glutaminase family. Homotetramer.

It carries out the reaction L-glutamine + H2O = L-glutamate + NH4(+). In Azorhizobium caulinodans (strain ATCC 43989 / DSM 5975 / JCM 20966 / LMG 6465 / NBRC 14845 / NCIMB 13405 / ORS 571), this protein is Glutaminase.